A 962-amino-acid chain; its full sequence is Phosphatidylinositol 3,4,5-trisphosphate 3-phosphatase and dual-specificity protein phosphatase daf-18 (962 aa).

Residues 1–37 (MVTPPPDVPSTSTRSMARDLQENPNRQPGEPRVSEPY) form a disordered region. Residues 58-230 (CRTEYQNIDL…YYYHKLRERE (173 aa)) form the Phosphatase tensin-type domain. Cys169 acts as the Phosphocysteine intermediate in catalysis. The 297-residue stretch at 234–530 (LPLRMQLIGV…GMKLHVVLRC (297 aa)) folds into the C2 tensin-type domain. Disordered regions lie at residues 382–416 (DTSI…WQIV) and 689–731 (IENT…RLPD). Positions 392 to 403 (RRNETPMRKIDP) are enriched in basic and acidic residues. Over residues 692-704 (TGPSTSGSSAPGT) the composition is skewed to low complexity. A compositionally biased stretch (basic and acidic residues) spans 706–720 (KKTEASQSDKVKPAT).

This sequence belongs to the PTEN phosphatase protein family. As to quaternary structure, interacts (via C-terminus) with vab-1 (via kinase domain); the interaction is independent of vab-1 kinase activity. Interacts with arr-1 and mpz-1; the interaction may inhibit daf-18. Interacts (via C-terminus) with daf-2 (via kinase domain). Phosphorylated by vab-1 on tyrosine residues which may promote daf-18 degradation. Expressed in embryo, larvae and in adult germline (at protein level). Expressed at equal levels in the 6 vulva precursor cells (VPCs) of L2 larvae and in the descendant cells of the induced VPCs (at protein level). Expressed in the uterus (at protein level). Expressed in the Z2/Z3 germline precursors, oocytes, several amphid neurons and weakly in the nerve cord (at protein level).

The protein resides in the perikaryon. It localises to the cell membrane. It is found in the cell projection. The protein localises to the axon. Its subcellular location is the dendrite. The protein resides in the cytoplasm. It localises to the nucleus. It carries out the reaction a 1,2-diacyl-sn-glycero-3-phospho-(1D-myo-inositol-3,4,5-trisphosphate) + H2O = a 1,2-diacyl-sn-glycero-3-phospho-(1D-myo-inositol-4,5-bisphosphate) + phosphate. The enzyme catalyses O-phospho-L-seryl-[protein] + H2O = L-seryl-[protein] + phosphate. It catalyses the reaction O-phospho-L-threonyl-[protein] + H2O = L-threonyl-[protein] + phosphate. The catalysed reaction is O-phospho-L-tyrosyl-[protein] + H2O = L-tyrosyl-[protein] + phosphate. It carries out the reaction 1,2-dioctanoyl-sn-glycero-3-phospho-(1D-myo-inositol-3,4,5-trisphosphate) + H2O = 1,2-dioctanoyl-sn-glycero-3-phospho-(1D-myo-inositol-4,5-bisphosphate) + phosphate. The enzyme catalyses 1,2-dihexadecanoyl-sn-glycero-3-phospho-(1D-myo-inositol-3,4,5-trisphosphate) + H2O = 1,2-dihexadecanoyl-sn-glycero-3-phospho-(1D-myo-inositol-4,5-bisphosphate) + phosphate. In terms of biological role, acts as a dual-specificity protein phosphatase, dephosphorylating tyrosine-, serine- and threonine-phosphorylated proteins. Also acts as a lipid phosphatase, removing the phosphate in the D3 position of the inositol ring from phosphatidylinositol 3,4,5-trisphosphate. By dephosphorylating PtdIns(3,4,5)P3 antagonizes PtdIns(3,4,5)P3 production by age-1/PI3K and thus, negatively regulates daf-2-mediated processes including dauer formation, longevity, fat metabolism, chemotaxis towards salt, thermotolerance and axon guidance. Similarly, promotes apoptosis during embryonic development by suppressing the recruitment of the prosurvival kinases akt-1/2 to the plasma membrane. In addition, regulates Z2/Z3 germline precursor cell cycle by maintaining them arrested at the G2 stage and by controlling their growth during L1 diapause. After sperm depletion in larvae and adult hermaphrodites, promotes germline stem cell quiescence and oocyte accumulation. By dephosphorylating ephrin-like receptor vab-1 on tyrosine residues, negatively regulates oocyte maturation downstream of vab-1 and upstream of mpk-1, independently of daf-2. Plays a role in postembryonic muscle arm extensions. Required for neurite outgrowth during AIY interneuron embryonic development. Mainly independently of daf-2, negatively regulates vulva induction probably by inhibiting mpk-1 phosphorylation. Both lipid and protein phosphatase activities are required for the regulation of vulva induction. Plays a role in gonad and germline development following the L1 diapause. This is Phosphatidylinositol 3,4,5-trisphosphate 3-phosphatase and dual-specificity protein phosphatase daf-18 from Caenorhabditis elegans.